The following is a 524-amino-acid chain: Keratin, type II cytoskeletal 71 (524 aa).

Residues 1-130 (MNRQFTCKSG…DPEIQKVRAQ (130 aa)) form a head region. Residues 131–166 (EREQIKALNNKFASFIDKVRFLEQQNQVLETKWELL) are coil 1A. Positions 131-444 (EREQIKALNN…KLLESEECRM (314 aa)) constitute an IF rod domain. The interval 167–185 (QQLDLNNCKNNLEPILEGY) is linker 1. The segment at 186–277 (ISNLRKQLET…CLYEAEIAQI (92 aa)) is coil 1B. Residues 278 to 301 (QSHISDMSVILSMDNNRDLNLDSI) are linker 12. The segment at 302–440 (IDEVRAQYEE…ATYRKLLESE (139 aa)) is coil 2. Positions 441 to 524 (ECRMSGEFPS…QSASSKKASR (84 aa)) are tail. The segment at 491-524 (VRGGEGRSRGSTSDYKDTLGKGSSQSASSKKASR) is disordered. Residues 494–509 (GEGRSRGSTSDYKDTL) show a composition bias toward basic and acidic residues. The segment covering 510-524 (GKGSSQSASSKKASR) has biased composition (low complexity).

The protein belongs to the intermediate filament family. As to quaternary structure, heterodimer of a type I and a type II keratin. Associates with KRT16 and/or KRT17.

Its subcellular location is the cytoplasm. It is found in the cytoskeleton. Functionally, plays a central role in hair formation. Essential component of keratin intermediate filaments in the inner root sheath (IRS) of the hair follicle. This Felis catus (Cat) protein is Keratin, type II cytoskeletal 71 (KRT71).